We begin with the raw amino-acid sequence, 221 residues long: SIN3-HDAC complex-associated factor (221 aa).

Disordered stretches follow at residues 110–153 (KLQK…ASSS) and 201–221 (AAAEKPEEQGPAPLPISTQEW). A compositionally biased stretch (basic and acidic residues) spans 111 to 121 (LQKEFKRHNSD). Low complexity predominate over residues 124 to 135 (STTSSASPAQSP). Polar residues predominate over residues 136–153 (CYSNQSDEGSDTEMASSS).

This sequence belongs to the SINHCAF family. As to quaternary structure, component of the Sin3/HDAC corepressor complex at least composed of BRMS1, BRMS1L, ING2, SAP30, SAP30L, HDAC1. Found in a complex composed of at least SINHCAF, SIN3A, HDAC1, SAP30, RBBP4, OGT and TET1. Interacts with SIN3A and OGT. As to expression, embryonic stem cells (at protein level).

Its subcellular location is the nucleus. Its function is as follows. Subunit of the Sin3 deacetylase complex (Sin3/HDAC), this subunit is important for the repression of genes encoding components of the TGF-beta signaling pathway. Core component of a SIN3A complex (composed of at least SINHCAF, SIN3A, HDAC1, SAP30, RBBP4, OGT and TET1) present in embryonic stem (ES) cells. Promotes the stability of SIN3A and its presence on chromatin and is essential for maintaining the potential of ES cells to proliferate rapidly, while ensuring a short G1-phase of the cell cycle, thereby preventing premature lineage priming. This is SIN3-HDAC complex-associated factor (Sinhcaf) from Mus musculus (Mouse).